The sequence spans 509 residues: Maturase K (509 aa).

Belongs to the intron maturase 2 family. MatK subfamily.

Its subcellular location is the plastid. It is found in the chloroplast. Functionally, usually encoded in the trnK tRNA gene intron. Probably assists in splicing its own and other chloroplast group II introns. The protein is Maturase K of Schlumbergera truncata (Thanksgiving cactus).